Reading from the N-terminus, the 207-residue chain is Probable GTP-binding protein EngB (207 aa).

The 181-residue stretch at 23 to 203 (GAPEVCFVGR…GAHIENWISP (181 aa)) folds into the EngB-type G domain. GTP is bound by residues 31–38 (GRSNAGKS), 58–62 (GRTRL), 83–86 (DLPG), 150–153 (TKAD), and 182–184 (FSS). 2 residues coordinate Mg(2+): serine 38 and threonine 60.

The protein belongs to the TRAFAC class TrmE-Era-EngA-EngB-Septin-like GTPase superfamily. EngB GTPase family. The cofactor is Mg(2+).

Necessary for normal cell division and for the maintenance of normal septation. In Bordetella bronchiseptica (strain ATCC BAA-588 / NCTC 13252 / RB50) (Alcaligenes bronchisepticus), this protein is Probable GTP-binding protein EngB.